The chain runs to 421 residues: Lipid II:glycine glycyltransferase (421 aa).

This sequence belongs to the FemABX family. As to quaternary structure, monomer.

Its subcellular location is the cytoplasm. It catalyses the reaction beta-D-GlcNAc-(1-&gt;4)-Mur2Ac(oyl-L-Ala-D-isoglutaminyl-L-Lys-D-Ala-D-Ala)-di-trans,octa-cis-undecaprenyl diphosphate + glycyl-tRNA(Gly) = beta-D-GlcNAc-(1-&gt;4)-Mur2Ac(oyl-L-Ala-D-isoglutaminyl-L-Lys-(N(6)-Gly)-D-Ala-D-Ala)-di-trans,octa-cis-undecaprenyl diphosphate + tRNA(Gly) + H(+). Catalyzes the incorporation of the first glycine of the pentaglycine interpeptide bridge, which is characteristic of the S.aureus peptidoglycan. This glycine is added to the epsilon-amino group of the L-lysine of the membrane-bound lipid II intermediate (GlcNAc-(beta-1,4)-N-acetylmuramic acid(-L-Ala-D-iGln-L-Lys-D-Ala-D-Ala)-pyrophosphoryl-undecaprenol), using glycyl-tRNA(Gly) as donor, in a ribosome-independent mechanism. Involved in methicillin resistance. The protein is Lipid II:glycine glycyltransferase (femX) of Staphylococcus aureus (strain MRSA252).